Here is an 807-residue protein sequence, read N- to C-terminus: Putative AC transposase (807 aa).

Disordered regions lie at residues 42 to 140 and 785 to 807; these read GLKR…KKCT and MDEDEDAIEFSKNNEDVASGSSP. The span at 84–98 shows a compositional bias: polar residues; that stretch reads QSVSSSNANGTATDP. Repeat copies occupy residues 109-110, 111-112, 113-114, 115-116, 117-118, 119-120, 121-122, 123-124, 125-126, and 127-128. Positions 109–128 are 10 X 2 AA tandem repeats of P-[QE]; that stretch reads PQPQPQPQPEPQPQPQPEPE. Residues 110–125 show a composition bias toward pro residues; that stretch reads QPQPQPQPEPQPQPQP.

The sequence is that of Putative AC transposase from Zea mays (Maize).